A 262-amino-acid polypeptide reads, in one-letter code: MEEIADKTFFRYCLLTLIFAGPPTAVLLKFLQAPYGKHNRTGWGPTVSPPIAWFVMESPTLWLTLLLFPFGRHALNPKSLLLFSPYLIHYFHRTIIYPLRLFRSSFPAGKNGFPITIAALAFTFNLLNGYIQARWVSHYKDDYEDGNWFWWRFVIGMVVFITGMYINITSDRTLVRLKKENRGGYVIPRGGWFELVSCPNYFGEAIEWLGWAVMTWSWAGIGFFLYTCSNLFPRARASHKWYIAKFKEEYPKTRKAVIPFVY.

The next 6 membrane-spanning stretches (helical) occupy residues 13–33 (CLLT…FLQA), 51–71 (IAWF…FPFG), 79–99 (SLLL…IYPL), 113–133 (FPIT…YIQA), 148–168 (WFWW…YINI), and 205–225 (AIEW…GFFL).

This sequence belongs to the steroid 5-alpha reductase family.

The protein localises to the membrane. It carries out the reaction a 3-oxo-5alpha-steroid + NADP(+) = a 3-oxo-Delta(4)-steroid + NADPH + H(+). The catalysed reaction is 5alpha-campestan-3-one + NADP(+) = campest-4-en-3-one + NADPH + H(+). It catalyses the reaction (22S,24R)-22-hydroxy-5alpha-ergostan-3-one + NADP(+) = (22S)-22-hydroxycampest-4-en-3-one + NADPH + H(+). The enzyme catalyses 3-dehydro-6-deoxoteasterone + NADP(+) = (22R,23R)-22,23-dihydroxycampest-4-en-3-one + NADPH + H(+). Its pathway is plant hormone biosynthesis; brassinosteroid biosynthesis. Its activity is regulated as follows. Inhibited by the 4-azasteroids 4-MA. In terms of biological role, involved in a reduction step in the biosynthesis of the plant steroid, brassinolide (BL); acts at the second step in brassinolide biosynthesis in the 5alpha-reduction of (24R)- 24-methylcholest-4-en-3-one, which is further modified to form campestanol. Can use progesterone, testosterone, androstenedione and campestenone as substrate. Also catalyzes the conversion of campest-4-en-3-one (campesta-4-en-3-one, 4-en-3-one) to campest-3-one (campesta-3-one, 3-one), of (22S,24R)-22-hydroxyergost-4-en-3-one (22-hydroxy-campesta-4-en-3-one, 22-OH-4-en-3-one) to (22S,24R)-22-hydroxy-5alpha-ergostan-3-one (22-hydroxy-campesta-3-one, 22-OH-3-one), and of (22R,23R)-22,23-dihydroxy-5alpha-campestan-3-one (22,23,diOH-4-en-3-one) to (22R,23R)-22,23-dihydroxycampest-4-en-3-one (6-deoxo3DT). Required for the brassinosteroid- (BR) dependent regulation of seed size and shape as well as embryo development. This is Steroid 5-alpha-reductase DET2 from Arabidopsis thaliana (Mouse-ear cress).